A 624-amino-acid polypeptide reads, in one-letter code: Ceramide transfer protein (624 aa).

Positions 1 to 11 are enriched in polar residues; that stretch reads MSDNQSWNSSG. Residues 1–24 form a disordered region; the sequence is MSDNQSWNSSGSEEDPETESGPPV. The PH domain maps to 23 to 117; that stretch reads PVERCGVLSK…WVDAIEQHKT (95 aa). Residues Ser-126, Ser-132, and Ser-135 each carry the phosphoserine modification. Positions 202-221 are disordered; it reads DDEDDFPTTRSDGDFLHNTN. Residues 263–303 are a coiled coil; sequence IELMVKREESWQKRHDREVEKRRRVEEAYKNVMEELKKKPR. Phosphoserine is present on Ser-315. An FFAT motif is present at residues 321-327; that stretch reads EFFDAVE. Tyr-372 is subject to Phosphotyrosine. Phosphoserine occurs at positions 373, 377, and 380. The 230-residue stretch at 389 to 618 folds into the START domain; the sequence is DVHRFSSQVE…FTSYVQEKTA (230 aa). An N-acylsphing-4-enine contacts are provided by Glu-472, Gln-493, Asn-530, and Tyr-579.

Interacts with VAPA and VAPB. Interaction with VAPB is less efficient than with VAPA. Interacts (via FFAT motif) with MOSPD2 (via MSP domain). In terms of processing, phosphorylation on Ser-132 decreases the affinity toward phosphatidylinositol 4-phosphate at Golgi membranes and reduces ceramide transfer activity. Inactivated by hyperphosphorylation of serine residues by CSNK1G2/CK1 that triggers dissociation from the Golgi complex, thus down-regulating ER-to-Golgi transport of ceramide and sphingomyelin synthesis.

The protein resides in the cytoplasm. It localises to the golgi apparatus. The protein localises to the endoplasmic reticulum. The enzyme catalyses N-hexadecanoylsphing-4-enine(in) = N-hexadecanoylsphing-4-enine(out). Its function is as follows. Shelters ceramides and diacylglycerol lipids inside its START domain and mediates the intracellular trafficking of ceramides and diacylglycerol lipids in a non-vesicular manner. The polypeptide is Ceramide transfer protein (Cert1) (Mus musculus (Mouse)).